We begin with the raw amino-acid sequence, 697 residues long: Hormonally up-regulated neu tumor-associated kinase homolog (697 aa).

The region spanning 55–313 is the Protein kinase domain; that stretch reads YLIGRKLGEG…IQQALANRWL (259 aa). Residues 61–69 and lysine 84 each bind ATP; that span reads LGEGSFAKV. Aspartate 179 (proton acceptor) is an active-site residue. Basic and acidic residues-rich tracts occupy residues 405–424 and 460–473; these read KMNK…KRGE and PVKE…ERES. Disordered regions lie at residues 405-480 and 586-642; these read KMNK…LSPF and DNTS…NCVR. The segment covering 586–600 has biased composition (polar residues); that stretch reads DNTSPIKGHSNQASF. Positions 607–626 are enriched in low complexity; the sequence is SPSSPESMSPTSPHSPHSPS. Residues 627–637 are compositionally biased toward polar residues; sequence CNNNISGNLGS.

Belongs to the protein kinase superfamily. CAMK Ser/Thr protein kinase family. SNF1 subfamily.

The catalysed reaction is L-seryl-[protein] + ATP = O-phospho-L-seryl-[protein] + ADP + H(+). It carries out the reaction L-threonyl-[protein] + ATP = O-phospho-L-threonyl-[protein] + ADP + H(+). The protein is Hormonally up-regulated neu tumor-associated kinase homolog (hunk) of Xenopus tropicalis (Western clawed frog).